We begin with the raw amino-acid sequence, 179 residues long: Adenine phosphoribosyltransferase (179 aa).

This sequence belongs to the purine/pyrimidine phosphoribosyltransferase family. In terms of assembly, homodimer.

The protein localises to the cytoplasm. It catalyses the reaction AMP + diphosphate = 5-phospho-alpha-D-ribose 1-diphosphate + adenine. It functions in the pathway purine metabolism; AMP biosynthesis via salvage pathway; AMP from adenine: step 1/1. In terms of biological role, catalyzes a salvage reaction resulting in the formation of AMP, that is energically less costly than de novo synthesis. The sequence is that of Adenine phosphoribosyltransferase from Haemophilus ducreyi (strain 35000HP / ATCC 700724).